Reading from the N-terminus, the 152-residue chain is uncharacterized protein (152 aa).

The next 3 membrane-spanning stretches (helical) occupy residues 15–35 (IINV…IYDI), 43–63 (LVVA…LILT), and 117–137 (TFLL…KLLI).

To M.jannaschii MJ0129 and MJ0587.

The protein localises to the cell membrane. This is an uncharacterized protein from Methanocaldococcus jannaschii (strain ATCC 43067 / DSM 2661 / JAL-1 / JCM 10045 / NBRC 100440) (Methanococcus jannaschii).